A 185-amino-acid polypeptide reads, in one-letter code: Ribosome-recycling factor (185 aa).

The interval Leu-142 to Asp-161 is disordered.

The protein belongs to the RRF family.

Its subcellular location is the cytoplasm. Its function is as follows. Responsible for the release of ribosomes from messenger RNA at the termination of protein biosynthesis. May increase the efficiency of translation by recycling ribosomes from one round of translation to another. This chain is Ribosome-recycling factor, found in Paenarthrobacter aurescens (strain TC1).